We begin with the raw amino-acid sequence, 364 residues long: MAQQTPLYEQHTLCGARMVDFHGWMMPLHYGSQIDEHHAVRTDAGMFDVSHMTIVDLRGSRTREFLRYLLANDVAKLTKSGKALYSGMLNASGGVIDDLIVYYFTEDFFRLVVNSATREKDLSWITQHAEPFGIEITVRDDLSMIAVQGPNAQAKAATLFNDAQRQAVEGMKPFFGVQAGDLFIATTGYTGEAGYEIALPNEKAADFWRALVEAGVKPCGLGARDTLRLEAGMNLYSQEMDETISPLAANMGWTIAWEPADRDFIGREALEAQREHGTEKLVGLVMTEKGVLRNELPVRFTDVQGNQHEGIITSGTFSPTLGYSIALARVPEGIGETAIVQIRNREMPVKVTKPVFVRNGKAVA.

Belongs to the GcvT family. In terms of assembly, the glycine cleavage system is composed of four proteins: P, T, L and H.

The catalysed reaction is N(6)-[(R)-S(8)-aminomethyldihydrolipoyl]-L-lysyl-[protein] + (6S)-5,6,7,8-tetrahydrofolate = N(6)-[(R)-dihydrolipoyl]-L-lysyl-[protein] + (6R)-5,10-methylene-5,6,7,8-tetrahydrofolate + NH4(+). Its function is as follows. The glycine cleavage system catalyzes the degradation of glycine. The chain is Aminomethyltransferase from Shigella dysenteriae serotype 1 (strain Sd197).